The sequence spans 1017 residues: Rho-GTPase-activating protein LRG1 (1017 aa).

Met-1 carries the N-acetylmethionine modification. LIM zinc-binding domains follow at residues 28–88 and 98–148; these read CARC…LCQY and CHVC…CKYH. Residues 155-184 enclose the LIM zinc-binding 3; truncated domain; sequence KRCKGCEFPISDQYIEFPKGEEIHCWHPEC. Residues 419-474 form the LIM zinc-binding 4 domain; sequence CAGCNKYIQEECIQFYEHRWHIACFTCSSCHKNINPRSLTDPTFNKEKKKILCSHC. Ser-562 is modified (phosphoserine). The disordered stretch occupies residues 570–602; that stretch reads TDLNDPTKQGDSKNLVIQTDDPSSSQQVSTREN. Polar residues predominate over residues 584-602; the sequence is LVIQTDDPSSSQQVSTREN. Residues 730 to 953 enclose the Rho-GAP domain; that stretch reads APLDVLCEKW…YLITHNEEMA (224 aa).

In terms of assembly, interacts with CDC42, RHO1 and RHO2.

Its subcellular location is the cytoplasm. The protein localises to the bud. It localises to the bud neck. Acts in signal transduction. Activates CDC42, RHO1 and RHO2. Negatively regulates 1,3-beta-glucan synthesis. May be responsible for the down-regulation of CDC42 during mating. In Saccharomyces cerevisiae (strain ATCC 204508 / S288c) (Baker's yeast), this protein is Rho-GTPase-activating protein LRG1 (LRG1).